Consider the following 491-residue polypeptide: 2,3-bisphosphoglycerate-independent phosphoglycerate mutase (491 aa).

Positions 11 and 61 each coordinate Mn(2+). The active-site Phosphoserine intermediate is Ser-61. Substrate-binding positions include His-118, 147-148 (RD), Arg-177, Arg-183, 248-251 (RSDR), and Lys-320. Mn(2+)-binding residues include Asp-386, His-390, Asp-427, His-428, and His-445.

This sequence belongs to the BPG-independent phosphoglycerate mutase family. As to quaternary structure, monomer. Mn(2+) is required as a cofactor.

The enzyme catalyses (2R)-2-phosphoglycerate = (2R)-3-phosphoglycerate. It functions in the pathway carbohydrate degradation; glycolysis; pyruvate from D-glyceraldehyde 3-phosphate: step 3/5. Catalyzes the interconversion of 2-phosphoglycerate and 3-phosphoglycerate. The sequence is that of 2,3-bisphosphoglycerate-independent phosphoglycerate mutase from Sulfurimonas denitrificans (strain ATCC 33889 / DSM 1251) (Thiomicrospira denitrificans (strain ATCC 33889 / DSM 1251)).